The chain runs to 480 residues: Probable glycosyltransferase At5g25310 (480 aa).

Residues 1 to 10 (MDKFQSKFTR) are Cytoplasmic-facing. Residues 11–31 (FGFISICFGSIALVLLISHCS) form a helical; Signal-anchor for type II membrane protein membrane-spanning segment. Over 32 to 480 (TSFFDYSFQK…WLRRLNLKLT (449 aa)) the chain is Lumenal. Residues Asn85, Asn120, Asn243, Asn271, and Asn281 are each glycosylated (N-linked (GlcNAc...) asparagine).

It belongs to the glycosyltransferase 47 family.

It localises to the golgi apparatus membrane. In terms of biological role, may be involved in cell wall biosynthesis. The sequence is that of Probable glycosyltransferase At5g25310 from Arabidopsis thaliana (Mouse-ear cress).